Here is a 50-residue protein sequence, read N- to C-terminus: Metallothionein zym1 (50 aa).

12 residues coordinate Zn(2+): cysteine 7, cysteine 15, cysteine 17, cysteine 21, cysteine 23, cysteine 26, cysteine 30, cysteine 32, cysteine 40, cysteine 42, cysteine 45, and cysteine 47.

This sequence belongs to the metallothionein superfamily.

Its subcellular location is the cytoplasm. It is found in the nucleus. Metallothionein involved in tolerance to zinc and cadmium. Binds four zinc ions. The polypeptide is Metallothionein zym1 (zym1) (Schizosaccharomyces pombe (strain 972 / ATCC 24843) (Fission yeast)).